The sequence spans 398 residues: Alpha-(1,3)-fucosyltransferase 4 (398 aa).

The Cytoplasmic segment spans residues 1 to 15 (MRARWGRRGARRGGP). The chain crosses the membrane as a helical; Signal-anchor for type II membrane protein span at residues 16–40 (GLPGTHLALLAASLLSSSVAIYVCW). Over 41-398 (KQLPPLPWAS…VPNLAGWFQQ (358 aa)) the chain is Lumenal. N-linked (GlcNAc...) asparagine glycosylation is found at Asn84, Asn183, and Asn311.

The protein belongs to the glycosyltransferase 10 family.

It is found in the golgi apparatus. It localises to the golgi stack membrane. The catalysed reaction is a beta-D-galactosyl-(1-&gt;4)-N-acetyl-beta-D-glucosaminyl derivative + GDP-beta-L-fucose = a beta-D-galactosyl-(1-&gt;4)-[alpha-L-fucosyl-(1-&gt;3)]-N-acetyl-beta-D-glucosaminyl derivative + GDP + H(+). The enzyme catalyses an N-acetyl-alpha-neuraminyl-(2-&gt;3)-beta-D-galactosyl-(1-&gt;4)-N-acetyl-beta-D-glucosaminyl derivative + GDP-beta-L-fucose = an alpha-Neu5Ac-(2-&gt;3)-beta-D-Gal-(1-&gt;4)-[alpha-L-Fuc-(1-&gt;3)]-beta-D-GlcNAc derivative + GDP + H(+). It catalyses the reaction an alpha-Neu5Ac-(2-&gt;3)-beta-D-Gal-(1-&gt;4)-beta-D-GlcNAc-(1-&gt;3)-beta-D-Gal-(1-&gt;4)-beta-D-GlcNAc derivative + GDP-beta-L-fucose = an alpha-Neu5Ac-(2-&gt;3)-beta-D-Gal-(1-&gt;4)-beta-D-GlcNAc-(1-&gt;3)-beta-D-Gal-(1-&gt;4)-[alpha-L-Fuc-(1-&gt;3)]-beta-D-GlcNAc derivative + GDP + H(+). It carries out the reaction an alpha-Neu5Ac-(2-&gt;3)-beta-D-Gal-(1-&gt;4)-beta-D-GlcNAc6S derivative + GDP-beta-L-fucose = an alpha-Neu5Ac-(2-&gt;3)-beta-D-Gal-(1-&gt;4)-[alpha-L-Fuc-(1-&gt;3)]-beta-D-GlcNAc6S derivative + GDP + H(+). It participates in protein modification; protein glycosylation. Its function is as follows. Catalyzes alpha(1-&gt;3) linkage of fucosyl moiety transferred from GDP-beta-L-fucose to N-acetyl glucosamine (GlcNAc) within type 2 lactosamine (LacNAc, Gal-beta(1-&gt;4)GlcNAc) glycan attached to N- or O-linked glycoproteins. Robustly fucosylates nonsialylated distal LacNAc unit of the polylactosamine chain to form Lewis X antigen (CD15), a glycan determinant known to mediate important cellular functions in development and immunity. Fucosylates with lower efficiency sialylated LacNAc acceptors to form sialyl Lewis X and 6-sulfo sialyl Lewis X determinants that serve as recognition epitopes for C-type lectins. Together with FUT7 contributes to SELE, SELL and SELP selectin ligand biosynthesis and selectin-dependent lymphocyte homing, leukocyte migration and blood leukocyte homeostasis. In a cell type specific manner, may also fucosylate the internal LacNAc unit of the polylactosamine chain to form VIM-2 antigen that serves as recognition epitope for SELE. The polypeptide is Alpha-(1,3)-fucosyltransferase 4 (FUT4) (Bos taurus (Bovine)).